The sequence spans 851 residues: Nucleolar RNA helicase 2 (851 aa).

The disordered stretch occupies residues 1-260 (MPGKLRSGAK…IPVEQKEGAF (260 aa)). Serine 7 and serine 13 each carry phosphoserine. 2 stretches are compositionally biased toward basic and acidic residues: residues 26–42 (PSEK…KTEE) and 99–113 (EPLE…KEII). Lysine 39 carries the N6-acetyllysine modification. A run of 3 repeats spans residues 117 to 153 (PSEE…GLSQ), 154 to 190 (PSEE…GLSQ), and 191 to 227 (PSEE…GLSQ). Residues 117-227 (PSEEEADMPK…SPRLKDGLSQ (111 aa)) form a 3 X 37 AA tandem repeats region. Serine 118 bears the Phosphoserine mark. Residues 133 to 145 (GKEANGDAGEKSP) are compositionally biased toward basic and acidic residues. N6-acetyllysine is present on lysine 134. Phosphoserine is present on residues serine 144, serine 155, serine 181, serine 192, serine 218, serine 236, serine 243, serine 244, and serine 245. The span at 170–182 (GKEANGDAGEKSP) shows a compositional bias: basic and acidic residues. Over residues 207–223 (GKEASGDAGEKSPRLKD) the composition is skewed to basic and acidic residues. Residues 226–237 (SQPSEPKSNSSD) are compositionally biased toward polar residues. Positions 246–257 (ETEKEIPVEQKE) are enriched in basic and acidic residues. Residues 258–286 (GAFSNFPISEETVKLLKARGVNFLFPIQA) carry the Q motif motif. The region spanning 289–468 (FHHVYSGKDL…KKYMKSTYEQ (180 aa)) is the Helicase ATP-binding domain. 302–309 (ARTGTGKT) contacts ATP. Threonine 368 is modified (phosphothreonine). Residues 411-414 (DEVD) carry the DEAD box motif. Residues 501 to 645 (DVIRVYSGHQ…GVPSATEIIK (145 aa)) enclose the Helicase C-terminal domain. Serine 639 is subject to Phosphoserine. An N6-acetyllysine modification is found at lysine 672. The tract at residues 783–851 (QPELEGPPDG…KRSFSKAFGQ (69 aa)) is disordered. Repeat copies occupy residues 807 to 811 (FRGQR), 817 to 823 (FRGQGQR), and 829 to 833 (FRGQR). A 3 X 5 AA repeats region spans residues 807-833 (FRGQRGGSRNFRGQGQRGGSRNFRGQR). Position 847 is an N6-acetyllysine (lysine 847).

It belongs to the DEAD box helicase family. DDX21/DDX50 subfamily. In terms of assembly, homodimer; homodimerizes via its N-terminus. Found in a multi-helicase-TICAM1 complex at least composed of DHX36, DDX1, DDX21 and TICAM1; this complex exists in resting cells with or without poly(I:C) RNA ligand stimulation. Interacts (via C-terminus) with TICAM1 (via TIR domain). Interacts with DHX36 (via C-terminus); this interaction serves as bridges to TICAM1. Interacts (via C-terminus) with DDX1 (via B30.2/SPRY domain); this interaction serves as bridges to TICAM1. Component of the B-WICH complex, at least composed of SMARCA5/SNF2H, BAZ1B/WSTF, SF3B1, DEK, MYO1C, ERCC6, MYBBP1A and DDX21. Interacts with C1QBP. Interacts with JUN. Interacts with WDR46. Interacts with MCM3AP. Interacts with WDR43. Interacts with KPNA3. Interacts with GID4. Post-translationally, acetylation by CREBBP/CBP inhibits the helicase activity. Deacetylation by SIRT7 promotes the helicase activity and overcomes R-loop-mediated stalling of RNA polymerases. In terms of tissue distribution, highly expressed in liver and testis. Expressed at lower level in brain, lungs, and skeletal muscle.

The protein resides in the nucleus. The protein localises to the nucleolus. It is found in the nucleoplasm. Its subcellular location is the cytoplasm. It localises to the cytosol. The protein resides in the mitochondrion. It carries out the reaction ATP + H2O = ADP + phosphate + H(+). Acetylation inhibits the helicase activity. RNA helicase that acts as a sensor of the transcriptional status of both RNA polymerase (Pol) I and II: promotes ribosomal RNA (rRNA) processing and transcription from polymerase II (Pol II). Binds various RNAs, such as rRNAs, snoRNAs, 7SK and, at lower extent, mRNAs. In the nucleolus, localizes to rDNA locus, where it directly binds rRNAs and snoRNAs, and promotes rRNA transcription, processing and modification. Required for rRNA 2'-O-methylation, possibly by promoting the recruitment of late-acting snoRNAs SNORD56 and SNORD58 with pre-ribosomal complexes. In the nucleoplasm, binds 7SK RNA and is recruited to the promoters of Pol II-transcribed genes: acts by facilitating the release of P-TEFb from inhibitory 7SK snRNP in a manner that is dependent on its helicase activity, thereby promoting transcription of its target genes. Functions as cofactor for JUN-activated transcription: required for phosphorylation of JUN at 'Ser-77'. Can unwind double-stranded RNA (helicase) and can fold or introduce a secondary structure to a single-stranded RNA (foldase). Together with SIRT7, required to prevent R-loop-associated DNA damage and transcription-associated genomic instability: deacetylation by SIRT7 activates the helicase activity, thereby overcoming R-loop-mediated stalling of RNA polymerases. Involved in rRNA processing. May bind to specific miRNA hairpins. Component of a multi-helicase-TICAM1 complex that acts as a cytoplasmic sensor of viral double-stranded RNA (dsRNA) and plays a role in the activation of a cascade of antiviral responses including the induction of pro-inflammatory cytokines via the adapter molecule TICAM1. The polypeptide is Nucleolar RNA helicase 2 (Ddx21) (Mus musculus (Mouse)).